The following is a 694-amino-acid chain: MAKINTQYSHPSRTHLKVKTSDRDLNRAENGLSRAHSSSEETSSVLQPGIAMETRGLADSGQGSFTGQGIARLSRLIFLLRRWAARHVHHQDQGPDSFPDRFRGAELKEVSSQESNAQANVGSQEPADRGRSAWPLAKCNTNTSNNTEEEKKTKKKDAIVVDPSSNLYYRWLTAIALPVFYNWYLLICRACFDELQSEYLMLWLVLDYSADVLYVLDVLVRARTGFLEQGLMVSDTNRLWQHYKTTTQFKLDVLSLVPTDLAYLKVGTNYPEVRFNRLLKFSRLFEFFDRTETRTNYPNMFRIGNLVLYILIIIHWNACIYFAISKFIGFGTDSWVYPNISIPEHGRLSRKYIYSLYWSTLTLTTIGETPPPVKDEEYLFVVVDFLVGVLIFATIVGNVGSMISNMNASRAEFQAKIDSIKQYMQFRKVTKDLETRVIRWFDYLWANKKTVDEKEVLKSLPDKLKAEIAINVHLDTLKKVRIFQDCEAGLLVELVLKLRPTVFSPGDYICKKGDIGKEMYIINEGKLAVVADDGVTQFVVLSDGSYFGEISILNIKGSKSGNRRTANIRSIGYSDLFCLSKDDLMEALTEYPEAKKALEEKGRQILMKDNLIDEELARAGADPKDLEEKVEQLGSSLDTLQTRFARLLAEYNATQMKMKQRLSQLESQVKGGGDKPLADGEVPGDATKTEDKQQ.

Composition is skewed to polar residues over residues 1-11 and 112-123; these read MAKINTQYSHP and SQESNAQANVGS. Disordered regions lie at residues 1–24 and 109–152; these read MAKI…SDRD and EVSS…EEKK. The Cytoplasmic segment spans residues 1–170; the sequence is MAKINTQYSH…VDPSSNLYYR (170 aa). A helical membrane pass occupies residues 171–192; that stretch reads WLTAIALPVFYNWYLLICRACF. The Extracellular segment spans residues 193–198; that stretch reads DELQSE. A helical transmembrane segment spans residues 199-219; it reads YLMLWLVLDYSADVLYVLDVL. The Cytoplasmic segment spans residues 220-246; the sequence is VRARTGFLEQGLMVSDTNRLWQHYKTT. Residues 247–266 traverse the membrane as a helical segment; that stretch reads TQFKLDVLSLVPTDLAYLKV. Residues 267-270 are Extracellular-facing; it reads GTNY. The chain crosses the membrane as a helical span at residues 271–288; that stretch reads PEVRFNRLLKFSRLFEFF. At 289 to 298 the chain is on the cytoplasmic side; the sequence is DRTETRTNYP. The ion conduction pathway stretch occupies residues 298–406; it reads PNMFRIGNLV…GNVGSMISNM (109 aa). Residues 299-321 traverse the membrane as a helical segment; that stretch reads NMFRIGNLVLYILIIIHWNACIY. Residues 322 to 347 lie on the Extracellular side of the membrane; the sequence is FAISKFIGFGTDSWVYPNISIPEHGR. Asn339 carries an N-linked (GalNAc...) asparagine glycan. Transmembrane regions (helical) follow at residues 348 to 378 and 379 to 403; these read LSRK…DEEY and LFVV…GSMI. The tract at residues 365-368 is selectivity filter; that stretch reads TIGE. The Cytoplasmic segment spans residues 404–694; sequence SNMNASRAEF…DATKTEDKQQ (291 aa). The interval 408–485 is C-linker; that stretch reads ASRAEFQAKI…TLKKVRIFQD (78 aa). The interval 488–608 is cyclic nucleotide-binding domain; it reads AGLLVELVLK…EEKGRQILMK (121 aa). Residues Gly548, Glu549, Ser551, Arg564, Thr565, and Asp609 each contribute to the 3',5'-cyclic GMP site. A coiled-coil region spans residues 626-669; the sequence is LEEKVEQLGSSLDTLQTRFARLLAEYNATQMKMKQRLSQLESQV. Positions 662-694 are disordered; sequence LSQLESQVKGGGDKPLADGEVPGDATKTEDKQQ.

It belongs to the cyclic nucleotide-gated cation channel (TC 1.A.1.5) family. CNGA3 subfamily. In terms of assembly, forms heterotetrameric channels composed of CNGA3 and CNGB3 subunits with 3:1 stoichiometry. Prominently expressed in retina.

Its subcellular location is the cell membrane. The catalysed reaction is Ca(2+)(in) = Ca(2+)(out). It carries out the reaction Na(+)(in) = Na(+)(out). It catalyses the reaction K(+)(in) = K(+)(out). The enzyme catalyses NH4(+)(in) = NH4(+)(out). The catalysed reaction is Rb(+)(in) = Rb(+)(out). It carries out the reaction Li(+)(in) = Li(+)(out). It catalyses the reaction Cs(+)(in) = Cs(+)(out). Inhibited by L-cis-diltiazem. Pore-forming subunit of the cone cyclic nucleotide-gated channel. Mediates cone photoresponses at bright light converting transient changes in intracellular cGMP levels into electrical signals. In the dark, cGMP levels are high and keep the channel open enabling a steady inward current carried by Na(+) and Ca(2+) ions that leads to membrane depolarization and neurotransmitter release from synaptic terminals. Upon photon absorption cGMP levels decline leading to channel closure and membrane hyperpolarization that ultimately slows neurotransmitter release and signals the presence of light, the end point of the phototransduction cascade. Pore-forming subunit of the gustatory cyclic nucleotide-gated channel. In the taste buds, may sense oral extracellular pH and conduct ion currents that modulate the excitability of taste cells. Conducts cGMP- and cAMP-gated ion currents, with permeability for monovalent and divalent cations. This chain is Cyclic nucleotide-gated channel alpha-3, found in Homo sapiens (Human).